The sequence spans 247 residues: Complement C1q subcomponent subunit B (247 aa).

The signal sequence occupies residues 1–22 (MKTPRGSVLVLLLLNLLRVSWA). A Pyrrolidone carboxylic acid modification is found at Gln-23. Pro-29, Pro-32, Pro-35, Pro-47, and Pro-50 each carry 4-hydroxyproline. Positions 30–78 (SIPGIPGIPGKPGSDGKPGTPGTKGEKGLPGLVSHLNENGEKGDPGFPG) are disordered. In terms of domain architecture, Collagen-like spans 39-98 (GKPGSDGKPGTPGTKGEKGLPGLVSHLNENGEKGDPGFPGMPGKVGPKGPIGPKGVPGPP). Residues 40-52 (KPGSDGKPGTPGT) show a composition bias toward low complexity. Lys-53 and Lys-56 each carry 5-hydroxylysine. Pro-59 bears the 4-hydroxyproline mark. Lys-71 carries the 5-hydroxylysine modification. Residues Pro-77 and Pro-80 each carry the 4-hydroxyproline modification. 5-hydroxylysine occurs at positions 86 and 92. Residues Pro-95 and Pro-98 each carry the 4-hydroxyproline modification. Lys-104 is subject to 5-hydroxylysine. One can recognise a C1q domain in the interval 111–247 (KATQKIAFSA…GFMLFPDTEA (137 aa)). A disulfide bridge connects residues Cys-175 and Cys-192. 3 residues coordinate Ca(2+): Asp-193, Tyr-194, and Gln-200.

As to quaternary structure, core component of the complement C1 complex, a calcium-dependent complex composed of 1 molecule of the C1Q subcomplex, 2 molecules of C1R and 2 molecules of C1S. The C1Q subcomplex is composed 18 subunits: 3 chains of C1QA, C1QB, and C1QC trimerize to form 6 collagen-like triple helices connected to six globular ligand-recognition modules (C1q domain). Hydroxylated on lysine and proline residues. Hydroxylated lysine residues can be glycosylated. Bovine C1Q contains up to 66.3 hydroxylysine-galactosylglucose residues. Total percentage hydroxylysine residues glycosylated is 92.0%. Contains no hydroxylysine-monosaccharides.

The protein localises to the secreted. The protein resides in the cell surface. The C1Q subcomplex is inhibited by sulfated molecules, such as triterpenoid sulfates, heparan sulfate, or chondroitin sulfates. Its function is as follows. Core component of the complement C1 complex, a multiprotein complex that initiates the classical pathway of the complement system, a cascade of proteins that leads to phagocytosis and breakdown of pathogens and signaling that strengthens the adaptive immune system. The classical complement pathway is initiated by the C1Q subcomplex of the C1 complex, which specifically binds IgG or IgM immunoglobulins complexed with antigens, forming antigen-antibody complexes on the surface of pathogens: C1QA, together with C1QB and C1QC, specifically recognizes and binds the Fc regions of IgG or IgM via its C1q domain. Immunoglobulin-binding activates the proenzyme C1R, which cleaves C1S, initiating the proteolytic cascade of the complement system. The C1Q subcomplex is activated by a hexamer of IgG complexed with antigens, while it is activated by a pentameric IgM. The C1Q subcomplex also recognizes and binds phosphatidylserine exposed on the surface of cells undergoing programmed cell death, possibly promoting activation of the complement system. The chain is Complement C1q subcomponent subunit B (C1QB) from Bos taurus (Bovine).